Reading from the N-terminus, the 249-residue chain is Ditrans,polycis-undecaprenyl-diphosphate synthase ((2E,6E)-farnesyl-diphosphate specific) (249 aa).

Residue Asp-18 is part of the active site. Asp-18 is a Mg(2+) binding site. Substrate is bound by residues 19 to 22 (GNNR), Phe-23, Lys-31, His-35, and 63 to 65 (SSE). Residue Asn-66 is the Proton acceptor of the active site. Substrate contacts are provided by residues Trp-67, Arg-69, Arg-186, and 192–194 (RLS). Glu-205 provides a ligand contact to Mg(2+).

The protein belongs to the UPP synthase family. Homodimer. Requires Mg(2+) as cofactor.

It catalyses the reaction 8 isopentenyl diphosphate + (2E,6E)-farnesyl diphosphate = di-trans,octa-cis-undecaprenyl diphosphate + 8 diphosphate. In terms of biological role, catalyzes the sequential condensation of isopentenyl diphosphate (IPP) with (2E,6E)-farnesyl diphosphate (E,E-FPP) to yield (2Z,6Z,10Z,14Z,18Z,22Z,26Z,30Z,34E,38E)-undecaprenyl diphosphate (di-trans,octa-cis-UPP). UPP is the precursor of glycosyl carrier lipid in the biosynthesis of bacterial cell wall polysaccharide components such as peptidoglycan and lipopolysaccharide. This Acinetobacter baylyi (strain ATCC 33305 / BD413 / ADP1) protein is Ditrans,polycis-undecaprenyl-diphosphate synthase ((2E,6E)-farnesyl-diphosphate specific).